We begin with the raw amino-acid sequence, 421 residues long: Methionine aminopeptidase 2 (421 aa).

A disordered region spans residues 1–53 (MTDAEIENSPASDLKELNLENEGVEQQDQAKADESDPVESKKKKNKKKKKKKS). Basic and acidic residues predominate over residues 28-40 (DQAKADESDPVES). S35 carries the phosphoserine modification. The span at 41-53 (KKKKNKKKKKKKS) shows a compositional bias: basic residues. H174 serves as a coordination point for substrate. 3 residues coordinate a divalent metal cation: D194, D205, and H274. Residue H282 participates in substrate binding. Residues E307 and E402 each coordinate a divalent metal cation.

This sequence belongs to the peptidase M24A family. Methionine aminopeptidase eukaryotic type 2 subfamily. Requires Co(2+) as cofactor. It depends on Zn(2+) as a cofactor. Mn(2+) serves as cofactor. Fe(2+) is required as a cofactor.

It localises to the cytoplasm. It carries out the reaction Release of N-terminal amino acids, preferentially methionine, from peptides and arylamides.. In terms of biological role, cotranslationally removes the N-terminal methionine from nascent proteins. The N-terminal methionine is often cleaved when the second residue in the primary sequence is small and uncharged (Met-Ala-, Cys, Gly, Pro, Ser, Thr, or Val). The sequence is that of Methionine aminopeptidase 2 from Saccharomyces cerevisiae (strain RM11-1a) (Baker's yeast).